Reading from the N-terminus, the 591-residue chain is Aspartate--tRNA(Asp/Asn) ligase (591 aa).

Glu174 is a binding site for L-aspartate. Positions 198–201 (QLFK) are aspartate. Residue Arg220 coordinates L-aspartate. ATP-binding positions include 220–222 (RDE) and Gln229. Residue His450 participates in L-aspartate binding. Glu483 provides a ligand contact to ATP. Arg490 provides a ligand contact to L-aspartate. 535–538 (GLDR) contributes to the ATP binding site.

This sequence belongs to the class-II aminoacyl-tRNA synthetase family. Type 1 subfamily. Homodimer.

The protein localises to the cytoplasm. It carries out the reaction tRNA(Asx) + L-aspartate + ATP = L-aspartyl-tRNA(Asx) + AMP + diphosphate. Its function is as follows. Aspartyl-tRNA synthetase with relaxed tRNA specificity since it is able to aspartylate not only its cognate tRNA(Asp) but also tRNA(Asn). Reaction proceeds in two steps: L-aspartate is first activated by ATP to form Asp-AMP and then transferred to the acceptor end of tRNA(Asp/Asn). This Pseudomonas fluorescens (strain ATCC BAA-477 / NRRL B-23932 / Pf-5) protein is Aspartate--tRNA(Asp/Asn) ligase.